A 195-amino-acid polypeptide reads, in one-letter code: Antigenic thaumatin-like protein ARB_01183 (195 aa).

Residues 1 to 22 (MHSNTAVIALSALAALVPAALA) form the signal peptide. 2 cysteine pairs are disulfide-bonded: Cys125-Cys153 and Cys130-Cys137. The disordered stretch occupies residues 171-195 (GPKKMFKPVQEKAANRPRHPHARPE). The segment covering 185-195 (NRPRHPHARPE) has biased composition (basic residues).

The protein belongs to the thaumatin family.

It is found in the secreted. Functionally, might be involved in the inhibition of growth of fungal competitors and pathogenicity. The chain is Antigenic thaumatin-like protein ARB_01183 from Arthroderma benhamiae (strain ATCC MYA-4681 / CBS 112371) (Trichophyton mentagrophytes).